Reading from the N-terminus, the 212-residue chain is Large ribosomal subunit protein uL3 (212 aa).

Residues 135–155 (ATHGNSVSHRAHGSTGQNQSP) show a composition bias toward polar residues. The interval 135-162 (ATHGNSVSHRAHGSTGQNQSPGKVFKGK) is disordered. The residue at position 153 (glutamine 153) is an N5-methylglutamine.

It belongs to the universal ribosomal protein uL3 family. Part of the 50S ribosomal subunit. Forms a cluster with proteins L14 and L19. Post-translationally, methylated by PrmB.

In terms of biological role, one of the primary rRNA binding proteins, it binds directly near the 3'-end of the 23S rRNA, where it nucleates assembly of the 50S subunit. This is Large ribosomal subunit protein uL3 from Psychrobacter arcticus (strain DSM 17307 / VKM B-2377 / 273-4).